The chain runs to 117 residues: Ubiquitin-like protein 3 (117 aa).

A Ubiquitin-like domain is found at 10 to 88; sequence INLRLILVSG…PFGKTTVMHL (79 aa). The S-palmitoyl cysteine moiety is linked to residue Cys-113. The residue at position 114 (Cys-114) is a Cysteine methyl ester. The S-geranylgeranyl cysteine moiety is linked to residue Cys-114. The propeptide at 115-117 is removed in mature form; the sequence is VIL.

The protein resides in the cell membrane. The chain is Ubiquitin-like protein 3 (UBL3) from Bos taurus (Bovine).